The sequence spans 396 residues: OTU domain-containing protein 3 (396 aa).

Residues methionine 1–glutamate 49 form a disordered region. Residues arginine 16 to proline 41 show a composition bias toward basic and acidic residues. The region spanning leucine 64 to isoleucine 188 is the OTU domain. An N6-acetyllysine modification is found at lysine 65. The cys-loop stretch occupies residues valine 69–cysteine 75. The active site involves aspartate 72. Cysteine 75 serves as the catalytic Nucleophile. 2 positions are modified to N6-acetyllysine: lysine 121 and lysine 128. Residues leucine 126–aspartate 136 are variable-loop. Residues tyrosine 176–histidine 181 are his-loop. Histidine 181 is a catalytic residue. An N6-acetyllysine modification is found at lysine 219. One can recognise a UBA-like domain in the interval aspartate 229–leucine 269. The disordered stretch occupies residues threonine 275–methionine 381. 3 stretches are compositionally biased toward basic and acidic residues: residues glutamate 280 to serine 301, asparagine 312 to alanine 331, and glutamine 343 to alanine 379. An N6-acetyllysine modification is found at lysine 290.

Glucose and fatty acids stimulate CREBBP-dependent acetylation, promoting its nuclear translocation.

The protein localises to the cytoplasm. Its subcellular location is the nucleus. It carries out the reaction Thiol-dependent hydrolysis of ester, thioester, amide, peptide and isopeptide bonds formed by the C-terminal Gly of ubiquitin (a 76-residue protein attached to proteins as an intracellular targeting signal).. In terms of biological role, deubiquitinating enzyme that hydrolyzes 'Lys-6'- and 'Lys-11'-linked polyubiquitin. Also hydrolyzes heterotypic (mixed and branched) and homotypic chains. Important regulator of energy metabolism. Glucose and fatty acids trigger its nuclear translocation by CBP-dependent acetylation. In the nucleus, deubiquitinates and stabilizes the nuclear receptor PPARD regulating the expression of various genes involved in glucose and lipid metabolism and oxidative phosphorylation. Also acts as a negative regulator of the ribosome quality control (RQC) by mediating deubiquitination of 40S ribosomal proteins RPS10/eS10 and RPS20/uS10, thereby antagonizing ZNF598-mediated 40S ubiquitination. This is OTU domain-containing protein 3 (Otud3) from Mus musculus (Mouse).